A 338-amino-acid chain; its full sequence is Ketol-acid reductoisomerase (NADP(+)) (338 aa).

The 181-residue stretch at methionine 1–threonine 181 folds into the KARI N-terminal Rossmann domain. NADP(+)-binding positions include tyrosine 24–glutamine 27, arginine 47, and serine 52. The active site involves histidine 107. Glycine 133 contacts NADP(+). A KARI C-terminal knotted domain is found at asparagine 182–isoleucine 327. The Mg(2+) site is built by aspartate 190, glutamate 194, glutamate 226, and glutamate 230. Position 251 (serine 251) interacts with substrate.

The protein belongs to the ketol-acid reductoisomerase family. Mg(2+) serves as cofactor.

The catalysed reaction is (2R)-2,3-dihydroxy-3-methylbutanoate + NADP(+) = (2S)-2-acetolactate + NADPH + H(+). It carries out the reaction (2R,3R)-2,3-dihydroxy-3-methylpentanoate + NADP(+) = (S)-2-ethyl-2-hydroxy-3-oxobutanoate + NADPH + H(+). The protein operates within amino-acid biosynthesis; L-isoleucine biosynthesis; L-isoleucine from 2-oxobutanoate: step 2/4. It functions in the pathway amino-acid biosynthesis; L-valine biosynthesis; L-valine from pyruvate: step 2/4. Involved in the biosynthesis of branched-chain amino acids (BCAA). Catalyzes an alkyl-migration followed by a ketol-acid reduction of (S)-2-acetolactate (S2AL) to yield (R)-2,3-dihydroxy-isovalerate. In the isomerase reaction, S2AL is rearranged via a Mg-dependent methyl migration to produce 3-hydroxy-3-methyl-2-ketobutyrate (HMKB). In the reductase reaction, this 2-ketoacid undergoes a metal-dependent reduction by NADPH to yield (R)-2,3-dihydroxy-isovalerate. The polypeptide is Ketol-acid reductoisomerase (NADP(+)) (Ralstonia nicotianae (strain ATCC BAA-1114 / GMI1000) (Ralstonia solanacearum)).